A 245-amino-acid polypeptide reads, in one-letter code: 1-(5-phosphoribosyl)-5-[(5-phosphoribosylamino)methylideneamino] imidazole-4-carboxamide isomerase (245 aa).

The Proton acceptor role is filled by aspartate 7. Aspartate 129 acts as the Proton donor in catalysis.

This sequence belongs to the HisA/HisF family.

The protein localises to the cytoplasm. The catalysed reaction is 1-(5-phospho-beta-D-ribosyl)-5-[(5-phospho-beta-D-ribosylamino)methylideneamino]imidazole-4-carboxamide = 5-[(5-phospho-1-deoxy-D-ribulos-1-ylimino)methylamino]-1-(5-phospho-beta-D-ribosyl)imidazole-4-carboxamide. The protein operates within amino-acid biosynthesis; L-histidine biosynthesis; L-histidine from 5-phospho-alpha-D-ribose 1-diphosphate: step 4/9. In Shewanella sp. (strain MR-7), this protein is 1-(5-phosphoribosyl)-5-[(5-phosphoribosylamino)methylideneamino] imidazole-4-carboxamide isomerase.